An 85-amino-acid chain; its full sequence is UPF0335 protein Atu3758 (85 aa).

The protein belongs to the UPF0335 family.

The polypeptide is UPF0335 protein Atu3758 (Agrobacterium fabrum (strain C58 / ATCC 33970) (Agrobacterium tumefaciens (strain C58))).